Here is an 894-residue protein sequence, read N- to C-terminus: UPF0182 protein GSU2333 (894 aa).

The next 7 helical transmembrane spans lie at 6–26 (FLLI…LITF), 50–70 (VGAG…NLYF), 98–118 (MVQM…LLAG), 162–182 (KGFV…VYFF), 203–223 (LAIL…LDAV), 250–270 (ILTL…WKGA), and 275–295 (LIPP…YPAM).

This sequence belongs to the UPF0182 family.

It localises to the cell membrane. In Geobacter sulfurreducens (strain ATCC 51573 / DSM 12127 / PCA), this protein is UPF0182 protein GSU2333.